A 423-amino-acid polypeptide reads, in one-letter code: GPI mannosyltransferase 2 (423 aa).

Helical transmembrane passes span 7 to 27 (LTLIFIAACLSRILQLTILSG), 102 to 122 (VILGGTIVANVAFVAATLVLY), 128 to 148 (IFNPTFAFLTSLLYLLPPTAT), 151 to 171 (APYTEPIYSLLTFSGIYLLSI), 191 to 211 (TGIFNSITLMCFAVFGDAHIF), 228 to 248 (FLSAILVVAPFFMFQHYTETV), 298 to 318 (LAMPILFFSLAGVVKFFSHLV), 333 to 353 (PPPILFELYSVHVLTMALLLF), and 400 to 420 (YWIGWTVVWGAVAAVLWAGHY).

Belongs to the PIGV family.

The protein resides in the endoplasmic reticulum membrane. The protein operates within glycolipid biosynthesis; glycosylphosphatidylinositol-anchor biosynthesis. Functionally, mannosyltransferase involved in glycosylphosphatidylinositol-anchor biosynthesis. Transfers the second mannose to the glycosylphosphatidylinositol during GPI precursor assembly. This chain is GPI mannosyltransferase 2 (GPI18), found in Cryptococcus neoformans var. neoformans serotype D (strain JEC21 / ATCC MYA-565) (Filobasidiella neoformans).